The sequence spans 72 residues: Translation initiation factor IF-1 (72 aa).

Residues 1-72 (MAKEEAIEVE…TRGRIIFRER (72 aa)) enclose the S1-like domain.

It belongs to the IF-1 family. In terms of assembly, component of the 30S ribosomal translation pre-initiation complex which assembles on the 30S ribosome in the order IF-2 and IF-3, IF-1 and N-formylmethionyl-tRNA(fMet); mRNA recruitment can occur at any time during PIC assembly.

It localises to the cytoplasm. Its function is as follows. One of the essential components for the initiation of protein synthesis. Stabilizes the binding of IF-2 and IF-3 on the 30S subunit to which N-formylmethionyl-tRNA(fMet) subsequently binds. Helps modulate mRNA selection, yielding the 30S pre-initiation complex (PIC). Upon addition of the 50S ribosomal subunit IF-1, IF-2 and IF-3 are released leaving the mature 70S translation initiation complex. The chain is Translation initiation factor IF-1 from Treponema denticola (strain ATCC 35405 / DSM 14222 / CIP 103919 / JCM 8153 / KCTC 15104).